Here is a 332-residue protein sequence, read N- to C-terminus: MYMKEKRDEILLKIIDLYIKSGQPVSSKQLISEYKLAVSSATIRNIMADLENEGFLEKTHTSSGRIPSISGYKFFAEHSKSKTNELLESKLKEIFSKRYLSIDVTLDEAAKAINEIIGLTLVTSSNVNTEVLKSIQLIELNNYSATIILVTSTGQVANKTIDLTNFQDIKLEDVRIAIRLFKERLINTSLINLREKALALKPILSKYIKNYETILQSFIGNVFEFENKNHVYGKSNIIKQEGIDRLHLTQILDLIENNSIWNMIESKVEEDETLKIDVRNSNISLISKKIFVNNTTKEISVIGSNRMDYISAKSAIALLESFIKPKFSKKNN.

This sequence belongs to the HrcA family.

Functionally, negative regulator of class I heat shock genes (grpE-dnaK-dnaJ and groELS operons). Prevents heat-shock induction of these operons. The protein is Heat-inducible transcription repressor HrcA of Mycoplasma mobile (strain ATCC 43663 / 163K / NCTC 11711) (Mesomycoplasma mobile).